Consider the following 687-residue polypeptide: Transketolase 2 (687 aa).

A substrate-binding site is contributed by His-47. Thiamine diphosphate-binding positions include His-87 and 135-137 (GPL). Asp-176 contributes to the Mg(2+) binding site. Thiamine diphosphate is bound by residues Gly-177 and Asn-206. Mg(2+) contacts are provided by Asn-206 and Ile-208. Substrate-binding residues include His-282, Arg-379, and Ser-406. His-282 provides a ligand contact to thiamine diphosphate. Glu-432 serves as the catalytic Proton donor. Phe-458 is a binding site for thiamine diphosphate. 4 residues coordinate substrate: His-482, Asp-490, His-494, and Arg-541.

The protein belongs to the transketolase family. Mg(2+) serves as cofactor. Requires thiamine diphosphate as cofactor.

It carries out the reaction D-sedoheptulose 7-phosphate + D-glyceraldehyde 3-phosphate = aldehydo-D-ribose 5-phosphate + D-xylulose 5-phosphate. Its activity is regulated as follows. Activity is increased sixfold following autotrophic growth on methanol compared with that of heterotrophically grown cells. Functionally, catalyzes the transfer of a two-carbon ketol group from a ketose donor to an aldose acceptor, via a covalent intermediate with the cofactor thiamine pyrophosphate. The chain is Transketolase 2 from Xanthobacter flavus.